The following is a 1113-amino-acid chain: Protein MGA2 (1113 aa).

The interval 91–114 (TPLEEEMESNRALKEEEEDEHENK) is disordered. Position 255 is a phosphoserine (S255). 2 stretches are compositionally biased toward polar residues: residues 344-357 (DTTKFNNTTTSSRR) and 437-452 (HIPSPTSMSEEGSESF). Disordered stretches follow at residues 344–376 (DTTKFNNTTTSSRRQLTEEESTTEYYSTDNNQL) and 437–462 (HIPSPTSMSEEGSESFNYHHRDNDNP). The residue at position 467 (S467) is a Phosphoserine. An IPT/TIG domain is found at 530–610 (PSINRVIPSQ…NENNNDDLPQ (81 aa)). The disordered stretch occupies residues 658–687 (IVGNDSPDSGTNGNSCSKSTGPSPNQHSMN). Polar residues predominate over residues 663–687 (SPDSGTNGNSCSKSTGPSPNQHSMN). ANK repeat units follow at residues 719–748 (LGRTLLHLACLKNYSSLVYTLIKKGARVND) and 752–781 (FGLTPLHFACISGDPKIIKMLLNCKVNYSL). A helical transmembrane segment spans residues 1037–1054 (MLIFFWIPLTLLLLTWFI).

Its subcellular location is the membrane. This chain is Protein MGA2 (MGA2), found in Saccharomyces cerevisiae (strain ATCC 204508 / S288c) (Baker's yeast).